Reading from the N-terminus, the 88-residue chain is Small ribosomal subunit protein uS15 (88 aa).

The protein belongs to the universal ribosomal protein uS15 family. In terms of assembly, part of the 30S ribosomal subunit. Forms a bridge to the 50S subunit in the 70S ribosome, contacting the 23S rRNA.

One of the primary rRNA binding proteins, it binds directly to 16S rRNA where it helps nucleate assembly of the platform of the 30S subunit by binding and bridging several RNA helices of the 16S rRNA. Its function is as follows. Forms an intersubunit bridge (bridge B4) with the 23S rRNA of the 50S subunit in the ribosome. This Francisella tularensis subsp. tularensis (strain FSC 198) protein is Small ribosomal subunit protein uS15.